Reading from the N-terminus, the 196-residue chain is MNMIWVCGVDEAGRGPLVGAVVAGAVVLDPENPIEGLKDSKKLSAVRREFLYEQIMEKAKAWGVGEASPTEIDSINILQATMLAMRRAVEDLAARLGEWPSKALIDGNRCPELSIAAEAIVKGDTKEPAISAASIVAKVTRDRQMIALHEQHPQYGFSQHMGYPTEAHFAALKQYGVCTEHRKSFAPVRRVLEGSF.

The RNase H type-2 domain occupies 4–196 (IWVCGVDEAG…PVRRVLEGSF (193 aa)). A divalent metal cation-binding residues include D10, E11, and D106.

The protein belongs to the RNase HII family. It depends on Mn(2+) as a cofactor. Mg(2+) is required as a cofactor.

It is found in the cytoplasm. The catalysed reaction is Endonucleolytic cleavage to 5'-phosphomonoester.. Endonuclease that specifically degrades the RNA of RNA-DNA hybrids. The chain is Ribonuclease HII from Polynucleobacter asymbioticus (strain DSM 18221 / CIP 109841 / QLW-P1DMWA-1) (Polynucleobacter necessarius subsp. asymbioticus).